The chain runs to 425 residues: Bifunctional phosphoribosylaminoimidazole carboxylase/phosphoribosylaminoimidazole succinocarboxamide synthetase (425 aa).

A2 bears the N-acetylalanine mark. The segment at 2 to 260 (ATAEVLNIGK…WVAERVELLL (259 aa)) is SAICAR synthetase domain. Residue Y22 is modified to Phosphotyrosine. Residue S27 is modified to Phosphoserine. N6-acetyllysine is present on K36. Residue S107 is modified to Phosphoserine. The residue at position 238 (T238) is a Phosphothreonine. Residue K247 is modified to N6-acetyllysine. The tract at residues 261–266 (KSESQC) is linker. Positions 267–425 (RVVVLMGSTS…ADKKIRECNL (159 aa)) are AIR carboxylase domain. S274 is modified (phosphoserine). Residue S332 participates in CO2 binding.

This sequence in the N-terminal section; belongs to the SAICAR synthetase family. It in the C-terminal section; belongs to the AIR carboxylase family. Class II subfamily. Homooctamer.

The enzyme catalyses 5-amino-1-(5-phospho-D-ribosyl)imidazole-4-carboxylate + L-aspartate + ATP = (2S)-2-[5-amino-1-(5-phospho-beta-D-ribosyl)imidazole-4-carboxamido]succinate + ADP + phosphate + 2 H(+). It carries out the reaction 5-amino-1-(5-phospho-D-ribosyl)imidazole-4-carboxylate + H(+) = 5-amino-1-(5-phospho-beta-D-ribosyl)imidazole + CO2. It participates in purine metabolism; IMP biosynthesis via de novo pathway; 5-amino-1-(5-phospho-D-ribosyl)imidazole-4-carboxamide from 5-amino-1-(5-phospho-D-ribosyl)imidazole-4-carboxylate: step 1/2. It functions in the pathway purine metabolism; IMP biosynthesis via de novo pathway; 5-amino-1-(5-phospho-D-ribosyl)imidazole-4-carboxylate from 5-amino-1-(5-phospho-D-ribosyl)imidazole (carboxylase route): step 1/1. Its function is as follows. Bifunctional phosphoribosylaminoimidazole carboxylase and phosphoribosylaminoimidazole succinocarboxamide synthetase catalyzing two reactions of the de novo purine biosynthetic pathway. This Homo sapiens (Human) protein is Bifunctional phosphoribosylaminoimidazole carboxylase/phosphoribosylaminoimidazole succinocarboxamide synthetase.